The sequence spans 377 residues: Palmitoyltransferase ZDHHC16 (377 aa).

Topologically, residues 1–79 are cytoplasmic; sequence MRGQWSLLLG…WLVDNVIRWC (79 aa). A helical membrane pass occupies residues 80-100; it reads GVVFVVLVIVLTSSIVAIAYL. Topologically, residues 101–116 are lumenal; it reads CVLPLILQTYSVPRLC. A helical membrane pass occupies residues 117–137; sequence WHFFYSHWNLILIVFHYYQAI. Residues 138 to 198 are Cytoplasmic-facing; sequence TTPPGYPPQG…NNCVGHYNHR (61 aa). The DHHC domain maps to 155 to 205; the sequence is SICKKCINPKPARTHHCSICNRCVLKMDHHCPWLNNCVGHYNHRYFFSFCF. Cysteine 185 serves as the catalytic S-palmitoyl cysteine intermediate. Residues 199 to 219 form a helical membrane-spanning segment; sequence YFFSFCFFMTLGCVYCSYGSW. The Lumenal segment spans residues 220–266; it reads DLFREAYAAIEKMKQLDKNKLQAVANQTYHQTPPPTFSFRERVTHKS. The helical transmembrane segment at 267–287 threads the bilayer; that stretch reads LVYLWFLCSSVALALGALTIW. Topologically, residues 288-377 are cytoplasmic; the sequence is HAVLISRGET…TAHSASVMAV (90 aa).

This sequence belongs to the DHHC palmitoyltransferase family. Interacts with ABL1. Interacts with COPS5/JAB1.

It is found in the endoplasmic reticulum membrane. It carries out the reaction L-cysteinyl-[protein] + hexadecanoyl-CoA = S-hexadecanoyl-L-cysteinyl-[protein] + CoA. Functionally, palmitoyl acyltransferase that mediates palmitoylation of proteins such as PLN and ZDHHC6. Required during embryonic heart development and cardiac function, possibly by mediating palmitoylation of PLN, thereby affecting PLN phosphorylation and homooligomerization. Also required for eye development. Palmitoylates ZDHHC6, affecting the quaternary assembly of ZDHHC6, its localization, stability and function. May play a role in DNA damage response. May be involved in apoptosis regulation. Involved in the proliferation of neural stem cells by regulating the FGF/ERK pathway. This Bos taurus (Bovine) protein is Palmitoyltransferase ZDHHC16.